Consider the following 379-residue polypeptide: NuA4 complex subunit EAF3 homolog (379 aa).

Residues Glu6 to Ile61 form the Tudor-knot domain. The interval Thr75–Phe212 is disordered. Positions Lys78–Lys87 are enriched in low complexity. Over residues Glu111–Glu141 the composition is skewed to acidic residues. The segment covering Ser165 to Asn199 has biased composition (low complexity). The MRG domain maps to Ser214–Ser377.

Component of the NuA4 histone acetyltransferase complex.

It is found in the nucleus. Its function is as follows. Component of the NuA4 histone acetyltransferase complex which is involved in transcriptional activation of selected genes principally by acetylation of nucleosomal histone H4 and H2A. The NuA4 complex is also involved in DNA repair. Also a component of a complex which acts to repress transcription by deacetylation of nucleosomal histones. The chain is NuA4 complex subunit EAF3 homolog from Dictyostelium discoideum (Social amoeba).